Reading from the N-terminus, the 1385-residue chain is Serine-aspartate repeat-containing protein D (1385 aa).

Positions Met-1 to Ile-35 are cleaved as a signal peptide. Residues Phe-23–Ser-34 carry the YSIRK-G/S signaling motif motif. The interval Leu-36–Glu-568 is ligand binding A region. Disordered regions lie at residues Glu-54–Glu-162 and Glu-200–Ala-224. Polar residues-rich tracts occupy residues Glu-62–Gln-71 and Glu-94–Lys-109. Over residues Lys-130–Asn-145 the composition is skewed to basic and acidic residues. Polar residues predominate over residues Thr-146–Gly-155. Positions Asn-205–Asn-214 are enriched in low complexity. CNA-B domains follow at residues Val-569–Pro-680, Lys-681–Pro-791, Lys-792–Pro-901, Thr-902–Pro-1012, and Lys-1013–Thr-1123. 3 disordered regions span residues Phe-856–Ile-886, Tyr-972–Thr-992, and Phe-1077–Ala-1361. Composition is skewed to polar residues over residues Ser-860–Ser-869 and Tyr-972–Asn-981. A compositionally biased stretch (low complexity) spans Thr-1081–Thr-1090. Acidic residues-rich tracts occupy residues Thr-1091–Glu-1101 and Tyr-1118–Ser-1324. Residues Leu-1348 to Gly-1352 carry the LPXTG sorting signal motif. Thr-1351 is modified (pentaglycyl murein peptidoglycan amidated threonine). The propeptide at Gly-1352–Lys-1385 is removed by sortase.

Belongs to the serine-aspartate repeat-containing protein (SDr) family. As to quaternary structure, interacts with host DSG1; this interaction increases S.aureus adherence to keratinocytes.

The protein localises to the secreted. The protein resides in the cell wall. Cell surface-associated calcium-binding protein which plays an important role in adhesion and pathogenesis. Mediates interactions with components of the extracellular matrix such as host DSG1 to promote bacterial adhesion to host cells. Contributes to the resistance to killing by innate immune components such as neutrophils present in blood and thus attenuates bacterial clearance. The chain is Serine-aspartate repeat-containing protein D (sdrD) from Staphylococcus aureus (strain Mu50 / ATCC 700699).